A 414-amino-acid chain; its full sequence is Tryptophan synthase beta chain (414 aa).

Residues 1–28 (MVSTISRQDQNNNDDLNQPSKEGRFGKY) form a disordered region. The segment covering 8-18 (QDQNNNDDLNQ) has biased composition (low complexity). At Lys108 the chain carries N6-(pyridoxal phosphate)lysine.

The protein belongs to the TrpB family. As to quaternary structure, tetramer of two alpha and two beta chains. Pyridoxal 5'-phosphate is required as a cofactor.

The catalysed reaction is (1S,2R)-1-C-(indol-3-yl)glycerol 3-phosphate + L-serine = D-glyceraldehyde 3-phosphate + L-tryptophan + H2O. It participates in amino-acid biosynthesis; L-tryptophan biosynthesis; L-tryptophan from chorismate: step 5/5. The beta subunit is responsible for the synthesis of L-tryptophan from indole and L-serine. This is Tryptophan synthase beta chain from Prochlorococcus marinus subsp. pastoris (strain CCMP1986 / NIES-2087 / MED4).